The sequence spans 471 residues: 3-isopropylmalate dehydratase large subunit (471 aa).

[4Fe-4S] cluster contacts are provided by cysteine 349, cysteine 409, and cysteine 412.

This sequence belongs to the aconitase/IPM isomerase family. LeuC type 1 subfamily. In terms of assembly, heterodimer of LeuC and LeuD. [4Fe-4S] cluster serves as cofactor.

The enzyme catalyses (2R,3S)-3-isopropylmalate = (2S)-2-isopropylmalate. Its pathway is amino-acid biosynthesis; L-leucine biosynthesis; L-leucine from 3-methyl-2-oxobutanoate: step 2/4. Functionally, catalyzes the isomerization between 2-isopropylmalate and 3-isopropylmalate, via the formation of 2-isopropylmaleate. The chain is 3-isopropylmalate dehydratase large subunit from Aliivibrio fischeri (strain ATCC 700601 / ES114) (Vibrio fischeri).